We begin with the raw amino-acid sequence, 534 residues long: H(+)/hexose cotransporter 1 (534 aa).

Over 1 to 21 the chain is Cytoplasmic; that stretch reads MAGGGVVVVSGRGLSTGDYRG. Residues 22-42 traverse the membrane as a helical segment; that stretch reads GLTVYVVMVAFMAACGGLLLG. Over 43–87 the chain is Extracellular; it reads YDNGVTGGVVSLEAFEKKFFPDVWAKKQEVHEDSPYCTYDNAKLQ. A helical membrane pass occupies residues 88–108; sequence LFVSSLFLAGLVSCLFASWIT. The Cytoplasmic segment spans residues 109–114; the sequence is RNWGRK. The chain crosses the membrane as a helical span at residues 115 to 135; it reads VTMGIGGAFFVAGGLVNAFAQ. Residues 136 to 144 lie on the Extracellular side of the membrane; that stretch reads DMAMLIVGR. A helical membrane pass occupies residues 145 to 165; sequence VLLGFGVGLGSQVVPQYLSEV. The Cytoplasmic segment spans residues 166-173; sequence APFSHRGM. Residues 174–194 form a helical membrane-spanning segment; the sequence is LNIGYQLFVTIGILIAGLVNY. Topologically, residues 195-204 are extracellular; sequence AVRDWENGWR. The helical transmembrane segment at 205–225 threads the bilayer; the sequence is LSLGPAAAPGAILFLGSLVLP. The Cytoplasmic segment spans residues 226 to 299; the sequence is ESPNFLVEKG…TSFVIQFFQQ (74 aa). The chain crosses the membrane as a helical span at residues 300–322; the sequence is FTGINAIIFYVPVLFSSLGSANS. Over 323-328 the chain is Extracellular; that stretch reads AALLNT. Residues 329 to 349 traverse the membrane as a helical segment; the sequence is VVVGAVNVGSTLIAVMFSDKF. Topologically, residues 350–352 are cytoplasmic; that stretch reads GRR. Residues 353–373 form a helical membrane-spanning segment; sequence FLLIEGGIQCCLAMLTTGVVL. Topologically, residues 374–387 are extracellular; sequence AIEFAKYGTDPLPK. Residues 388-408 traverse the membrane as a helical segment; it reads AVASGILAVICIFISGFAWSW. Topologically, residues 409-433 are cytoplasmic; it reads GPMGWLIPSEIFTLETRPAGTAVAV. The helical transmembrane segment at 434–454 threads the bilayer; it reads VGNFLFSFVIGQAFVSMLCAM. The Extracellular segment spans residues 455 to 456; that stretch reads EY. A helical membrane pass occupies residues 457-477; sequence GVFLFFAGWLVIMVLCAIFLL. Over 478 to 534 the chain is Cytoplasmic; that stretch reads PETKGVPIERVQALYARHWFWNRVMGPAAAEVIAEDEKRVAAASAIIKEEELSKAMK.

Belongs to the major facilitator superfamily. Sugar transporter (TC 2.A.1.1) family.

It is found in the membrane. Active uptake of hexoses. This chain is H(+)/hexose cotransporter 1 (HUP1), found in Parachlorella kessleri (Green alga).